A 341-amino-acid chain; its full sequence is Putative ankyrin repeat protein FPV031 (341 aa).

ANK repeat units follow at residues 23–55 (DRNS…FQET), 58–87 (DNLT…IINQ), 92–124 (CGNT…ITNN), 125–158 (DGFT…IRDN), and 163–195 (TGLT…YSTC).

The protein is Putative ankyrin repeat protein FPV031 (ANK3) of Fowlpox virus (strain NVSL) (FPV).